We begin with the raw amino-acid sequence, 92 residues long: Acylphosphatase (92 aa).

Positions 5 to 92 (CIAAYVYGVV…ADFQGFSIRY (88 aa)) constitute an Acylphosphatase-like domain. Active-site residues include R20 and N38.

This sequence belongs to the acylphosphatase family.

It catalyses the reaction an acyl phosphate + H2O = a carboxylate + phosphate + H(+). The protein is Acylphosphatase (acyP) of Serratia proteamaculans (strain 568).